The primary structure comprises 327 residues: Transaldolase (327 aa).

Lys-132 functions as the Schiff-base intermediate with substrate in the catalytic mechanism.

The protein belongs to the transaldolase family. Type 1 subfamily.

The protein resides in the cytoplasm. It carries out the reaction D-sedoheptulose 7-phosphate + D-glyceraldehyde 3-phosphate = D-erythrose 4-phosphate + beta-D-fructose 6-phosphate. It participates in carbohydrate degradation; pentose phosphate pathway; D-glyceraldehyde 3-phosphate and beta-D-fructose 6-phosphate from D-ribose 5-phosphate and D-xylulose 5-phosphate (non-oxidative stage): step 2/3. Its function is as follows. Transaldolase is important for the balance of metabolites in the pentose-phosphate pathway. This Chlamydia pneumoniae (Chlamydophila pneumoniae) protein is Transaldolase.